The following is a 383-amino-acid chain: S-adenosylmethionine synthase (383 aa).

His-15 provides a ligand contact to ATP. A Mg(2+)-binding site is contributed by Asp-17. Glu-43 serves as a coordination point for K(+). The L-methionine site is built by Glu-56 and Gln-99. A flexible loop region spans residues 99–109 (QSPDINQGVDR). ATP contacts are provided by residues 164–166 (DAK), 230–231 (RF), Asp-239, 245–246 (RK), Ala-262, and Lys-266. An L-methionine-binding site is contributed by Asp-239. Lys-270 contributes to the L-methionine binding site.

Belongs to the AdoMet synthase family. As to quaternary structure, homotetramer; dimer of dimers. The cofactor is Mg(2+). K(+) is required as a cofactor.

It is found in the cytoplasm. The catalysed reaction is L-methionine + ATP + H2O = S-adenosyl-L-methionine + phosphate + diphosphate. Its pathway is amino-acid biosynthesis; S-adenosyl-L-methionine biosynthesis; S-adenosyl-L-methionine from L-methionine: step 1/1. Functionally, catalyzes the formation of S-adenosylmethionine (AdoMet) from methionine and ATP. The overall synthetic reaction is composed of two sequential steps, AdoMet formation and the subsequent tripolyphosphate hydrolysis which occurs prior to release of AdoMet from the enzyme. The polypeptide is S-adenosylmethionine synthase (Shewanella baltica (strain OS223)).